A 350-amino-acid polypeptide reads, in one-letter code: tRNA pseudouridine synthase D (350 aa).

Residue D85 is the Nucleophile of the active site. The region spanning 160 to 310 is the TRUD domain; that stretch reads GVINYFGEQR…EAARRTILLR (151 aa).

Belongs to the pseudouridine synthase TruD family.

It catalyses the reaction uridine(13) in tRNA = pseudouridine(13) in tRNA. Responsible for synthesis of pseudouridine from uracil-13 in transfer RNAs. The polypeptide is tRNA pseudouridine synthase D (Idiomarina loihiensis (strain ATCC BAA-735 / DSM 15497 / L2-TR)).